The chain runs to 194 residues: Imidazoleglycerol-phosphate dehydratase (194 aa).

This sequence belongs to the imidazoleglycerol-phosphate dehydratase family.

The protein resides in the cytoplasm. It carries out the reaction D-erythro-1-(imidazol-4-yl)glycerol 3-phosphate = 3-(imidazol-4-yl)-2-oxopropyl phosphate + H2O. It participates in amino-acid biosynthesis; L-histidine biosynthesis; L-histidine from 5-phospho-alpha-D-ribose 1-diphosphate: step 6/9. The chain is Imidazoleglycerol-phosphate dehydratase from Listeria monocytogenes serotype 4b (strain F2365).